We begin with the raw amino-acid sequence, 185 residues long: Imidazoleglycerol-phosphate dehydratase (185 aa).

Belongs to the imidazoleglycerol-phosphate dehydratase family.

Its subcellular location is the cytoplasm. The catalysed reaction is D-erythro-1-(imidazol-4-yl)glycerol 3-phosphate = 3-(imidazol-4-yl)-2-oxopropyl phosphate + H2O. It participates in amino-acid biosynthesis; L-histidine biosynthesis; L-histidine from 5-phospho-alpha-D-ribose 1-diphosphate: step 6/9. This Pyrobaculum arsenaticum (strain DSM 13514 / JCM 11321 / PZ6) protein is Imidazoleglycerol-phosphate dehydratase.